A 277-amino-acid chain; its full sequence is Phosphatidylglycerol--prolipoprotein diacylglyceryl transferase (277 aa).

Transmembrane regions (helical) follow at residues Trp-22 to Ala-42, Ile-51 to Tyr-71, Ile-89 to Ile-109, and Ile-116 to Gly-136. Arg-137 lines the a 1,2-diacyl-sn-glycero-3-phospho-(1'-sn-glycerol) pocket. 3 helical membrane-spanning segments follow: residues Gln-177 to Ile-197, Gly-205 to Met-225, and Phe-235 to Tyr-255.

It belongs to the Lgt family.

It localises to the cell membrane. It catalyses the reaction L-cysteinyl-[prolipoprotein] + a 1,2-diacyl-sn-glycero-3-phospho-(1'-sn-glycerol) = an S-1,2-diacyl-sn-glyceryl-L-cysteinyl-[prolipoprotein] + sn-glycerol 1-phosphate + H(+). It participates in protein modification; lipoprotein biosynthesis (diacylglyceryl transfer). In terms of biological role, catalyzes the transfer of the diacylglyceryl group from phosphatidylglycerol to the sulfhydryl group of the N-terminal cysteine of a prolipoprotein, the first step in the formation of mature lipoproteins. This is Phosphatidylglycerol--prolipoprotein diacylglyceryl transferase from Listeria welshimeri serovar 6b (strain ATCC 35897 / DSM 20650 / CCUG 15529 / CIP 8149 / NCTC 11857 / SLCC 5334 / V8).